The following is a 185-amino-acid chain: Ribosome-recycling factor (185 aa).

The protein belongs to the RRF family.

The protein localises to the cytoplasm. Functionally, responsible for the release of ribosomes from messenger RNA at the termination of protein biosynthesis. May increase the efficiency of translation by recycling ribosomes from one round of translation to another. The sequence is that of Ribosome-recycling factor from Nitrosomonas europaea (strain ATCC 19718 / CIP 103999 / KCTC 2705 / NBRC 14298).